A 30-amino-acid chain; its full sequence is Photosystem I reaction center subunit XII (30 aa).

A helical transmembrane segment spans residues 7–29 (VYTVLLIALLASVLAIRLGSTLY).

The protein belongs to the PsaM family.

The protein localises to the plastid. Its subcellular location is the chloroplast thylakoid membrane. The chain is Photosystem I reaction center subunit XII from Trieres chinensis (Marine centric diatom).